The primary structure comprises 227 residues: Lipoprotein-releasing system ATP-binding protein LolD (227 aa).

One can recognise an ABC transporter domain in the interval 6–227 (LKIEGLRKTY…HLEDGVLVER (222 aa)). An ATP-binding site is contributed by 43–50 (APSGAGKS).

Belongs to the ABC transporter superfamily. Lipoprotein translocase (TC 3.A.1.125) family. In terms of assembly, the complex is composed of two ATP-binding proteins (LolD) and two transmembrane proteins (LolC and LolE).

The protein localises to the cell inner membrane. Its function is as follows. Part of the ABC transporter complex LolCDE involved in the translocation of mature outer membrane-directed lipoproteins, from the inner membrane to the periplasmic chaperone, LolA. Responsible for the formation of the LolA-lipoprotein complex in an ATP-dependent manner. This is Lipoprotein-releasing system ATP-binding protein LolD from Ruegeria sp. (strain TM1040) (Silicibacter sp.).